The following is a 313-amino-acid chain: Ribosomal RNA small subunit methyltransferase H (313 aa).

Residues 35 to 37 (GGH), Asp55, Phe79, Asp101, and Gln108 each bind S-adenosyl-L-methionine.

Belongs to the methyltransferase superfamily. RsmH family.

The protein localises to the cytoplasm. The enzyme catalyses cytidine(1402) in 16S rRNA + S-adenosyl-L-methionine = N(4)-methylcytidine(1402) in 16S rRNA + S-adenosyl-L-homocysteine + H(+). Specifically methylates the N4 position of cytidine in position 1402 (C1402) of 16S rRNA. This Escherichia coli O81 (strain ED1a) protein is Ribosomal RNA small subunit methyltransferase H.